The sequence spans 2197 residues: Protein Ycf2 (2197 aa).

ATP is bound at residue 1539-1546 (GSIGTGRS).

This sequence belongs to the Ycf2 family.

The protein localises to the plastid. Its subcellular location is the chloroplast stroma. Functionally, probable ATPase of unknown function. Its presence in a non-photosynthetic plant (Epifagus virginiana) and experiments in tobacco indicate that it has an essential function which is probably not related to photosynthesis. The protein is Protein Ycf2 of Ipomoea purpurea (Common morning glory).